The chain runs to 31 residues: MLTVIAYLGLLASVLIGTIVIYLGLVKVKLI.

Residues 4–24 (VIAYLGLLASVLIGTIVIYLG) traverse the membrane as a helical segment.

The protein belongs to the PetL family. In terms of assembly, the 4 large subunits of the cytochrome b6-f complex are cytochrome b6, subunit IV (17 kDa polypeptide, PetD), cytochrome f and the Rieske protein, while the 4 small subunits are PetG, PetL, PetM and PetN. The complex functions as a dimer.

The protein localises to the plastid. It localises to the chloroplast thylakoid membrane. In terms of biological role, component of the cytochrome b6-f complex, which mediates electron transfer between photosystem II (PSII) and photosystem I (PSI), cyclic electron flow around PSI, and state transitions. PetL is important for photoautotrophic growth as well as for electron transfer efficiency and stability of the cytochrome b6-f complex. The chain is Cytochrome b6-f complex subunit 6 from Oltmannsiellopsis viridis (Marine flagellate).